Reading from the N-terminus, the 170-residue chain is Adenine phosphoribosyltransferase (170 aa).

It belongs to the purine/pyrimidine phosphoribosyltransferase family. Homodimer.

The protein resides in the cytoplasm. It catalyses the reaction AMP + diphosphate = 5-phospho-alpha-D-ribose 1-diphosphate + adenine. It participates in purine metabolism; AMP biosynthesis via salvage pathway; AMP from adenine: step 1/1. Functionally, catalyzes a salvage reaction resulting in the formation of AMP, that is energically less costly than de novo synthesis. In Acaryochloris marina (strain MBIC 11017), this protein is Adenine phosphoribosyltransferase.